We begin with the raw amino-acid sequence, 187 residues long: MTKVHYSRAPENSTKSCKARGSDLRVHFKNTHEAAMALRGMPLRRAQAFLNHVKEHKEIVPFRRFHGGIGRAAQTKQWNTTQGRWPVKSADFLLDLLKNAESNAEYKGLDVDHLVIEHINVQRAAKLRRRTYRAHGRINPYMSSPCHIEVILAEKEDVVSKPTDDAAPKVKKESKRKQRRQLARGEF.

A compositionally biased stretch (basic and acidic residues) spans 159-171; it reads VSKPTDDAAPKVK. Residues 159–187 form a disordered region; sequence VSKPTDDAAPKVKKESKRKQRRQLARGEF. Positions 172–187 are enriched in basic residues; the sequence is KESKRKQRRQLARGEF.

Belongs to the universal ribosomal protein uL22 family.

In Caenorhabditis elegans, this protein is Large ribosomal subunit protein uL22 (rpl-17).